The following is a 444-amino-acid chain: Phosphoglucosamine mutase (444 aa).

Ser102 acts as the Phosphoserine intermediate in catalysis. 4 residues coordinate Mg(2+): Ser102, Asp241, Asp243, and Asp245. Ser102 is subject to Phosphoserine.

It belongs to the phosphohexose mutase family. Mg(2+) serves as cofactor. Activated by phosphorylation.

It carries out the reaction alpha-D-glucosamine 1-phosphate = D-glucosamine 6-phosphate. Its function is as follows. Catalyzes the conversion of glucosamine-6-phosphate to glucosamine-1-phosphate. In Actinobacillus pleuropneumoniae serotype 5b (strain L20), this protein is Phosphoglucosamine mutase.